We begin with the raw amino-acid sequence, 256 residues long: Probable elongation factor 1-delta (256 aa).

Phosphoserine occurs at positions 37, 53, and 89. Residues 110–146 are disordered; it reads NGVSKEPEVEAKKPEANDDDDDVDLFGSDSEEEDGEA. The segment covering 114–125 has biased composition (basic and acidic residues); that stretch reads KEPEVEAKKPEA. Residues 126-144 show a composition bias toward acidic residues; sequence NDDDDDVDLFGSDSEEEDG. Phosphoserine occurs at positions 137 and 139.

Belongs to the EF-1-beta/EF-1-delta family. In terms of assembly, EF-1 is composed of 4 subunits: alpha, beta, delta, and gamma.

Its function is as follows. EF-1-beta and EF-1-delta stimulate the exchange of GDP bound to EF-1-alpha to GTP. The sequence is that of Probable elongation factor 1-delta (eEF1delta) from Drosophila melanogaster (Fruit fly).